Consider the following 319-residue polypeptide: tRNA uridine(34) hydroxylase (319 aa).

Positions 127–221 (KQEDTVIIDA…YGKDPEVQGE (95 aa)) constitute a Rhodanese domain. Cysteine 181 (cysteine persulfide intermediate) is an active-site residue.

This sequence belongs to the TrhO family.

It catalyses the reaction uridine(34) in tRNA + AH2 + O2 = 5-hydroxyuridine(34) in tRNA + A + H2O. Its function is as follows. Catalyzes oxygen-dependent 5-hydroxyuridine (ho5U) modification at position 34 in tRNAs. This Bacillus thuringiensis (strain Al Hakam) protein is tRNA uridine(34) hydroxylase.